Here is a 271-residue protein sequence, read N- to C-terminus: Acetyl-coenzyme A carboxylase carboxyl transferase subunit alpha (271 aa).

The CoA carboxyltransferase C-terminal domain maps to 1–247 (MSRELIRTAD…KKTILEALGE (247 aa)).

This sequence belongs to the AccA family. In terms of assembly, acetyl-CoA carboxylase is a heterohexamer composed of biotin carboxyl carrier protein (AccB), biotin carboxylase (AccC) and two subunits each of ACCase subunit alpha (AccA) and ACCase subunit beta (AccD).

The protein resides in the cytoplasm. The enzyme catalyses N(6)-carboxybiotinyl-L-lysyl-[protein] + acetyl-CoA = N(6)-biotinyl-L-lysyl-[protein] + malonyl-CoA. The protein operates within lipid metabolism; malonyl-CoA biosynthesis; malonyl-CoA from acetyl-CoA: step 1/1. Component of the acetyl coenzyme A carboxylase (ACC) complex. First, biotin carboxylase catalyzes the carboxylation of biotin on its carrier protein (BCCP) and then the CO(2) group is transferred by the carboxyltransferase to acetyl-CoA to form malonyl-CoA. In Clostridium perfringens (strain 13 / Type A), this protein is Acetyl-coenzyme A carboxylase carboxyl transferase subunit alpha.